Here is a 315-residue protein sequence, read N- to C-terminus: Prephenate dehydratase (315 aa).

A Prephenate dehydratase domain is found at 7-190 (VVAYLGPAGT…ARTRFVAVQA (184 aa)). Residues 204-283 (SVIFSLPNVP…LVFVGSWPSN (80 aa)) enclose the ACT domain.

The enzyme catalyses prephenate + H(+) = 3-phenylpyruvate + CO2 + H2O. Its pathway is amino-acid biosynthesis; L-phenylalanine biosynthesis; phenylpyruvate from prephenate: step 1/1. The polypeptide is Prephenate dehydratase (pheA) (Corynebacterium glutamicum (strain ATCC 13032 / DSM 20300 / JCM 1318 / BCRC 11384 / CCUG 27702 / LMG 3730 / NBRC 12168 / NCIMB 10025 / NRRL B-2784 / 534)).